The following is a 275-amino-acid chain: MGSSGMKLVVVGAAGRMGQALIRLIHQTPGVQLHAAVAREGSAFVGRDAGEIAGLGPIGIEITSDPLQAFLHAEGVIDFTSPATSITFAGLAAQARIVHVVGTTGCSPQDEEKFKAASRHARIVKSGNMSLGVNLLSVLTQQAAQALDAQNWDIEILEMHHKHKVDAPSGTALLLGEAAAAGRKVDLTAASVRVRDGHTGAREAGTIGFATLRGGSVIGEHSVIFAGEGERVELSHYAGDRSIFARGAITAAVWAFDKKPGFYSMLDVLGLSQAE.

12–17 lines the NAD(+) pocket; sequence GAAGRM. R39 is an NADP(+) binding site. NAD(+) contacts are provided by residues 102–104 and 126–129; these read GTT and SGNM. H160 functions as the Proton donor/acceptor in the catalytic mechanism. A (S)-2,3,4,5-tetrahydrodipicolinate-binding site is contributed by H161. Residue K164 is the Proton donor of the active site. 170–171 serves as a coordination point for (S)-2,3,4,5-tetrahydrodipicolinate; that stretch reads GT.

This sequence belongs to the DapB family.

The protein resides in the cytoplasm. It catalyses the reaction (S)-2,3,4,5-tetrahydrodipicolinate + NAD(+) + H2O = (2S,4S)-4-hydroxy-2,3,4,5-tetrahydrodipicolinate + NADH + H(+). The catalysed reaction is (S)-2,3,4,5-tetrahydrodipicolinate + NADP(+) + H2O = (2S,4S)-4-hydroxy-2,3,4,5-tetrahydrodipicolinate + NADPH + H(+). It participates in amino-acid biosynthesis; L-lysine biosynthesis via DAP pathway; (S)-tetrahydrodipicolinate from L-aspartate: step 4/4. Its function is as follows. Catalyzes the conversion of 4-hydroxy-tetrahydrodipicolinate (HTPA) to tetrahydrodipicolinate. This is 4-hydroxy-tetrahydrodipicolinate reductase from Agrobacterium fabrum (strain C58 / ATCC 33970) (Agrobacterium tumefaciens (strain C58)).